Here is a 280-residue protein sequence, read N- to C-terminus: 4-diphosphocytidyl-2-C-methyl-D-erythritol kinase (280 aa).

Residue Lys-8 is part of the active site. 91–101 (PVSAGLAGGST) contributes to the ATP binding site. Residue Asp-133 is part of the active site.

Belongs to the GHMP kinase family. IspE subfamily.

It catalyses the reaction 4-CDP-2-C-methyl-D-erythritol + ATP = 4-CDP-2-C-methyl-D-erythritol 2-phosphate + ADP + H(+). It participates in isoprenoid biosynthesis; isopentenyl diphosphate biosynthesis via DXP pathway; isopentenyl diphosphate from 1-deoxy-D-xylulose 5-phosphate: step 3/6. In terms of biological role, catalyzes the phosphorylation of the position 2 hydroxy group of 4-diphosphocytidyl-2C-methyl-D-erythritol. This chain is 4-diphosphocytidyl-2-C-methyl-D-erythritol kinase, found in Clostridium beijerinckii (strain ATCC 51743 / NCIMB 8052) (Clostridium acetobutylicum).